The chain runs to 232 residues: Large ribosomal subunit protein uL1 (232 aa).

This sequence belongs to the universal ribosomal protein uL1 family. In terms of assembly, part of the 50S ribosomal subunit.

Functionally, binds directly to 23S rRNA. The L1 stalk is quite mobile in the ribosome, and is involved in E site tRNA release. Its function is as follows. Protein L1 is also a translational repressor protein, it controls the translation of the L11 operon by binding to its mRNA. The sequence is that of Large ribosomal subunit protein uL1 from Levilactobacillus brevis (strain ATCC 367 / BCRC 12310 / CIP 105137 / JCM 1170 / LMG 11437 / NCIMB 947 / NCTC 947) (Lactobacillus brevis).